A 201-amino-acid polypeptide reads, in one-letter code: uncharacterized protein (201 aa).

Its function is as follows. May have a role in tissue tropism within the insect larvae. This is an uncharacterized protein from Lepidoptera (butterflies and moths).